A 475-amino-acid chain; its full sequence is Squamosa promoter-binding-like protein 12 (475 aa).

The interval 49-73 (NHGSTNSSGGTFTSSSELANGSSKS) is disordered. The span at 51–73 (GSTNSSGGTFTSSSELANGSSKS) shows a compositional bias: low complexity. The SBP-type zinc-finger motif lies at 177–254 (SSYCQVEGCK…SDHNARRRKP (78 aa)). The Zn(2+) site is built by Cys180, Cys185, Cys202, His205, Cys221, Cys224, His228, and Cys240. The Bipartite nuclear localization signal signature appears at 237 to 253 (KKSCRRRLSDHNARRRK). A disordered region spans residues 437–475 (GGGGFWQDGDDPPPLDHASQAQAFMHPGNGSSSGYGHLH). The span at 465–475 (NGSSSGYGHLH) shows a compositional bias: polar residues.

Expressed in young panicles.

Its subcellular location is the nucleus. In terms of biological role, trans-acting factor that binds specifically to the consensus nucleotide sequence 5'-TNCGTACAA-3'. May be involved in panicle development. This chain is Squamosa promoter-binding-like protein 12 (SPL12), found in Oryza sativa subsp. japonica (Rice).